Reading from the N-terminus, the 572-residue chain is Proline--tRNA ligase (572 aa).

Belongs to the class-II aminoacyl-tRNA synthetase family. ProS type 1 subfamily. Homodimer.

Its subcellular location is the cytoplasm. It catalyses the reaction tRNA(Pro) + L-proline + ATP = L-prolyl-tRNA(Pro) + AMP + diphosphate. Its function is as follows. Catalyzes the attachment of proline to tRNA(Pro) in a two-step reaction: proline is first activated by ATP to form Pro-AMP and then transferred to the acceptor end of tRNA(Pro). As ProRS can inadvertently accommodate and process non-cognate amino acids such as alanine and cysteine, to avoid such errors it has two additional distinct editing activities against alanine. One activity is designated as 'pretransfer' editing and involves the tRNA(Pro)-independent hydrolysis of activated Ala-AMP. The other activity is designated 'posttransfer' editing and involves deacylation of mischarged Ala-tRNA(Pro). The misacylated Cys-tRNA(Pro) is not edited by ProRS. In Escherichia coli O7:K1 (strain IAI39 / ExPEC), this protein is Proline--tRNA ligase.